The primary structure comprises 116 residues: MSQESSVLSESQEQLANNPKIEDTSPPSANSRDNSKPVLPWDYKNKAIEIKSFSGYKVNFTGWIRRDVREERQRGSEFTASDVKGSDDKATRKKEPADEDPEVKQLEKEGEDGLDS.

A compositionally biased stretch (low complexity) spans Met-1–Leu-15. Disordered regions lie at residues Met-1 to Pro-40 and Glu-70 to Ser-116. Residues Lys-84–Lys-108 show a composition bias toward basic and acidic residues.

In terms of assembly, component of the chromatin-remodeling INO80 complex, at least composed of ARP4, ARP5, ARP8, RVB1, RVB2, TAF14, NHP10, IES1, IES3, IES4, IES6, ACT1, IES2, IES5 and INO80.

It is found in the nucleus. In Saccharomyces cerevisiae (strain ATCC 204508 / S288c) (Baker's yeast), this protein is Ino eighty subunit 4 (IES4).